The following is a 119-amino-acid chain: uncharacterized protein (119 aa).

Residues 1–112 enclose the ABC transmembrane type-1 domain; sequence MVFNMRSTRG…FISSCLLLVL (112 aa). 2 consecutive transmembrane segments (helical) span residues 51-73 and 91-111; these read VLAWSRAIGEFGATLMLAGATRF and FEIAIGASLWLLFISSCLLLV.

The protein belongs to the binding-protein-dependent transport system permease family. CysTW subfamily.

Its subcellular location is the cell membrane. This is an uncharacterized protein from Haemophilus influenzae (strain ATCC 51907 / DSM 11121 / KW20 / Rd).